Reading from the N-terminus, the 201-residue chain is ATP-dependent Clp protease proteolytic subunit (201 aa).

The active-site Nucleophile is the Ser-98. The active site involves His-123.

Belongs to the peptidase S14 family. As to quaternary structure, fourteen ClpP subunits assemble into 2 heptameric rings which stack back to back to give a disk-like structure with a central cavity, resembling the structure of eukaryotic proteasomes.

Its subcellular location is the cytoplasm. It catalyses the reaction Hydrolysis of proteins to small peptides in the presence of ATP and magnesium. alpha-casein is the usual test substrate. In the absence of ATP, only oligopeptides shorter than five residues are hydrolyzed (such as succinyl-Leu-Tyr-|-NHMec, and Leu-Tyr-Leu-|-Tyr-Trp, in which cleavage of the -Tyr-|-Leu- and -Tyr-|-Trp bonds also occurs).. Cleaves peptides in various proteins in a process that requires ATP hydrolysis. Has a chymotrypsin-like activity. Plays a major role in the degradation of misfolded proteins. This is ATP-dependent Clp protease proteolytic subunit from Rickettsia felis (strain ATCC VR-1525 / URRWXCal2) (Rickettsia azadi).